A 601-amino-acid polypeptide reads, in one-letter code: Cdc42-interacting protein 4 (601 aa).

Residues 1–117 form a required for translocation to the plasma membrane in response to insulin, podosome formation and interaction with AKAP9 and microtubules region; sequence MDWGTELWDQ…EMKQERKMHF (117 aa). In terms of domain architecture, F-BAR spans 1-264; that stretch reads MDWGTELWDQ…AANAVDPKND (264 aa). A coiled-coil region spans residues 67 to 259; sequence FSQQQSFVQI…EGMKVAANAV (193 aa). Disordered stretches follow at residues 280 to 358, 390 to 420, and 478 to 543; these read GDVE…GRDP, DFSHLPPEQQRKRLQQQLEERSRELQKEVDQ, and NRGD…SPIG. The span at 289–302 shows a compositional bias: polar residues; that stretch reads QPMNRAPSDSSLGT. Residues 293-537 form an interaction with CDC42 region; the sequence is RAPSDSSLGT…TEFDEDFEEE (245 aa). The tract at residues 293-601 is interaction with PDE6G; sequence RAPSDSSLGT…PTSYLRVTLN (309 aa). Ser296, Ser298, and Ser299 each carry phosphoserine. The segment covering 314–329 has biased composition (basic residues); that stretch reads GRSRTKRWPFGKKNKP. Phosphoserine is present on Ser335. Positions 336–346 are enriched in low complexity; it reads PLGGPVPSALP. Phosphoserine is present on Ser351. Positions 388 to 481 form a coiled coil; the sequence is TEDFSHLPPE…ESRVLSNRGD (94 aa). Positions 393 to 470 constitute an REM-1 domain; sequence HLPPEQQRKR…VQKYEAWLAE (78 aa). Basic and acidic residues predominate over residues 407 to 420; sequence LEERSRELQKEVDQ. A required for interaction with FASLG and localization to lysosomes region spans residues 471–601; the sequence is AESRVLSNRG…PTSYLRVTLN (131 aa). At Ser482 the chain carries Phosphoserine. Residues 487–541 are interaction with DNM2 and WASL; that stretch reads ARPPDPPTSAPPDSSSNSASQDTKESSEEPPSEESQDTPIYTEFDEDFEEEPTSP. Residues 497-506 are compositionally biased toward low complexity; it reads PPDSSSNSAS. Residues 529 to 538 are compositionally biased toward acidic residues; the sequence is EFDEDFEEEP. Positions 529-601 are interaction with DNM1 and WASL; it reads EFDEDFEEEP…PTSYLRVTLN (73 aa). The segment at 538-601 is required for podosome formation; that stretch reads PTSPIGHCVA…PTSYLRVTLN (64 aa). The SH3 domain occupies 540–601; the sequence is SPIGHCVAIY…PTSYLRVTLN (62 aa). The interval 544-601 is interaction with WAS; that stretch reads HCVAIYHFEGSSEGTISMAEGEDLSLMEEDKGDGWTRVRRKEGGEGYVPTSYLRVTLN. The tract at residues 546–601 is interaction with ARHGAP17, DAAM1, DIAPH1 and DIAPH2; the sequence is VAIYHFEGSSEGTISMAEGEDLSLMEEDKGDGWTRVRRKEGGEGYVPTSYLRVTLN.

The protein belongs to the FNBP1 family. As to quaternary structure, homodimerizes, the dimers can polymerize end-to-end to form filamentous structures. Interacts with AKAP9, ARHGAP17, DAAM1, DIAPH1, DIAPH2, DNM1, FASLG/FASL, GAPVD1, LYN, microtubules, PDE6G, SRC and WAS/WASP. Interacts with the ligand binding domain of the thyroid receptor (TR) in the presence of thyroid hormone. May interact with CTNNB1 and HD/HTT. Interacts specifically with GTP-bound CDC42 and RHOQ. Interacts with DNM2 and WASL. In terms of processing, tyrosine phosphorylated. Also phosphorylated by PKA.

The protein resides in the cytoplasm. Its subcellular location is the cytoskeleton. The protein localises to the cell cortex. It localises to the lysosome. It is found in the golgi apparatus. The protein resides in the cell membrane. Its subcellular location is the cell projection. The protein localises to the phagocytic cup. In terms of biological role, required to coordinate membrane tubulation with reorganization of the actin cytoskeleton during endocytosis. Also acts as a link between CDC42 signaling and regulation of the actin cytoskeleton. Binds to lipids such as phosphatidylinositol 4,5-bisphosphate and phosphatidylserine and promotes membrane invagination and the formation of tubules. Also enhances actin polymerization in the vicinity of membrane tubules by recruiting WASL/N-WASP which in turn activates the Arp2/3 complex. Actin polymerization and dynamin may promote the fission of membrane tubules to form endocytic vesicles. Required for the formation of podosomes, actin-rich adhesion structures specific to monocyte-derived cells. Required for translocation of GLUT4 to the plasma membrane in response to insulin signaling. May be required for the lysosomal retention of FASLG/FASL. The sequence is that of Cdc42-interacting protein 4 (TRIP10) from Pongo abelii (Sumatran orangutan).